A 62-amino-acid polypeptide reads, in one-letter code: Large ribosomal subunit protein bL28 (62 aa).

The protein belongs to the bacterial ribosomal protein bL28 family.

In Helicobacter pylori (strain Shi470), this protein is Large ribosomal subunit protein bL28.